The chain runs to 120 residues: MKQLIIATLLSALSGGCMASSLRLPSAAELSGQWVLSGAEQHCDIRLNTDVLDGTTWKLAGDTACLQKLLPEAPVGWRPTPDGLTLTQADGSAVAFFSRNRDRYEHKLVDGSVRTLKKKA.

Positions 1-19 are cleaved as a signal peptide; that stretch reads MKQLIIATLLSALSGGCMA. An intrachain disulfide couples Cys-43 to Cys-65.

The protein belongs to the protease inhibitor I38 family. In terms of assembly, monomer.

Its subcellular location is the periplasm. Inhibitor of the extracellular proteases A, B, and C of E.chrysanthemi and the S.marcescens 50 kDa extracellular protease. It forms a non-covalent bond with the proteases and may prevent autocatalytic cleavage of the proteases zymogen in the periplasm. This is Proteinase inhibitor (inh) from Dickeya chrysanthemi (Pectobacterium chrysanthemi).